Reading from the N-terminus, the 305-residue chain is Ribosomal RNA small subunit methyltransferase H (305 aa).

S-adenosyl-L-methionine is bound by residues 30 to 32, Asp49, Phe74, Asp96, and Gln103; that span reads GGH.

It belongs to the methyltransferase superfamily. RsmH family.

It is found in the cytoplasm. It catalyses the reaction cytidine(1402) in 16S rRNA + S-adenosyl-L-methionine = N(4)-methylcytidine(1402) in 16S rRNA + S-adenosyl-L-homocysteine + H(+). Its function is as follows. Specifically methylates the N4 position of cytidine in position 1402 (C1402) of 16S rRNA. The chain is Ribosomal RNA small subunit methyltransferase H from Francisella tularensis subsp. tularensis (strain FSC 198).